The chain runs to 859 residues: Cation/H(+) antiporter 24 (859 aa).

The next 12 helical transmembrane spans lie at 64–84, 92–112, 122–142, 161–181, 194–214, 227–247, 258–278, 291–311, 312–332, 348–368, 384–404, and 438–458; these read AFST…VVSI, PRIV…FGGI, PIAN…FLFL, YIAA…GMAM, SIGG…YTVL, FAMS…VIFE, YSVF…LLVV, EGTL…LASC, FLTD…GLLV, TFIY…GTNI, FYMT…AALF, and IVGF…TAVT. Positions 538-566 are disordered; the sequence is IDHEQRKEEEEEEYEEEEEEPERKQSGRI. The span at 546–557 shows a compositional bias: acidic residues; the sequence is EEEEEYEEEEEE. Ser857 is modified (phosphoserine).

This sequence belongs to the monovalent cation:proton antiporter 2 (CPA2) transporter (TC 2.A.37) family. CHX (TC 2.A.37.4) subfamily. Specifically expressed in pollen.

The protein resides in the membrane. May operate as a cation/H(+) antiporter. This Arabidopsis thaliana (Mouse-ear cress) protein is Cation/H(+) antiporter 24 (CHX24).